Reading from the N-terminus, the 287-residue chain is UPF0098 protein AF_1698 (287 aa).

Belongs to the UPF0098 family.

This chain is UPF0098 protein AF_1698, found in Archaeoglobus fulgidus (strain ATCC 49558 / DSM 4304 / JCM 9628 / NBRC 100126 / VC-16).